Reading from the N-terminus, the 226-residue chain is Ribose-5-phosphate isomerase A (226 aa).

Substrate contacts are provided by residues 26–29 (TGST), 82–85 (DGAD), and 95–98 (KGGG). Glu104 serves as the catalytic Proton acceptor. Substrate is bound at residue Lys122.

Belongs to the ribose 5-phosphate isomerase family. As to quaternary structure, homodimer.

The catalysed reaction is aldehydo-D-ribose 5-phosphate = D-ribulose 5-phosphate. It participates in carbohydrate degradation; pentose phosphate pathway; D-ribose 5-phosphate from D-ribulose 5-phosphate (non-oxidative stage): step 1/1. Its function is as follows. Catalyzes the reversible conversion of ribose-5-phosphate to ribulose 5-phosphate. The chain is Ribose-5-phosphate isomerase A from Streptococcus thermophilus (strain CNRZ 1066).